The primary structure comprises 67 residues: Cell division protein ZapB (67 aa).

Residues 3–59 are a coiled coil; the sequence is LELLSKLETKIQAALETIELLKMELEEEKQTSSSLSEQNQQLQQELTSWNEKVTGLV.

The protein belongs to the ZapB family. As to quaternary structure, homodimer. The ends of the coiled-coil dimer bind to each other, forming polymers. Interacts with FtsZ.

The protein resides in the cytoplasm. Non-essential, abundant cell division factor that is required for proper Z-ring formation. It is recruited early to the divisome by direct interaction with FtsZ, stimulating Z-ring assembly and thereby promoting cell division earlier in the cell cycle. Its recruitment to the Z-ring requires functional FtsA or ZipA. This Shewanella halifaxensis (strain HAW-EB4) protein is Cell division protein ZapB.